The primary structure comprises 369 residues: tRNA/tmRNA (uracil-C(5))-methyltransferase (369 aa).

S-adenosyl-L-methionine contacts are provided by Q190, Y218, N223, E239, and D301. C326 (nucleophile) is an active-site residue. Catalysis depends on E360, which acts as the Proton acceptor.

This sequence belongs to the class I-like SAM-binding methyltransferase superfamily. RNA M5U methyltransferase family. TrmA subfamily.

It catalyses the reaction uridine(54) in tRNA + S-adenosyl-L-methionine = 5-methyluridine(54) in tRNA + S-adenosyl-L-homocysteine + H(+). The enzyme catalyses uridine(341) in tmRNA + S-adenosyl-L-methionine = 5-methyluridine(341) in tmRNA + S-adenosyl-L-homocysteine + H(+). Dual-specificity methyltransferase that catalyzes the formation of 5-methyluridine at position 54 (m5U54) in all tRNAs, and that of position 341 (m5U341) in tmRNA (transfer-mRNA). This Vibrio parahaemolyticus serotype O3:K6 (strain RIMD 2210633) protein is tRNA/tmRNA (uracil-C(5))-methyltransferase.